The sequence spans 149 residues: Transcription antitermination protein NusB (149 aa).

This sequence belongs to the NusB family.

Functionally, involved in transcription antitermination. Required for transcription of ribosomal RNA (rRNA) genes. Binds specifically to the boxA antiterminator sequence of the ribosomal RNA (rrn) operons. The polypeptide is Transcription antitermination protein NusB (Acinetobacter baylyi (strain ATCC 33305 / BD413 / ADP1)).